The chain runs to 475 residues: Tubulin gamma-1 chain (475 aa).

142-148 provides a ligand contact to GTP; sequence AGGTGSG. The disordered stretch occupies residues 453 to 475; sequence VKRGNGPVDSKSEDSRSVTSAGS.

Belongs to the tubulin family. As to quaternary structure, interacts with Ote.

It is found in the cytoplasm. Its subcellular location is the cytoskeleton. The protein resides in the microtubule organizing center. It localises to the centrosome. The protein localises to the perinuclear region. Tubulin is the major constituent of microtubules. The gamma chain is found at microtubule organizing centers (MTOC) such as the spindle poles or the centrosome, suggesting that it is involved in the minus-end nucleation of microtubule assembly. This is Tubulin gamma-1 chain (gammaTub23C) from Drosophila melanogaster (Fruit fly).